The sequence spans 206 residues: Nucleoside triphosphate pyrophosphatase (206 aa).

The active-site Proton acceptor is the Asp78.

This sequence belongs to the Maf family. The cofactor is a divalent metal cation.

It is found in the cytoplasm. The enzyme catalyses a ribonucleoside 5'-triphosphate + H2O = a ribonucleoside 5'-phosphate + diphosphate + H(+). It carries out the reaction a 2'-deoxyribonucleoside 5'-triphosphate + H2O = a 2'-deoxyribonucleoside 5'-phosphate + diphosphate + H(+). Functionally, nucleoside triphosphate pyrophosphatase. May have a dual role in cell division arrest and in preventing the incorporation of modified nucleotides into cellular nucleic acids. This Prochlorococcus marinus (strain MIT 9312) protein is Nucleoside triphosphate pyrophosphatase.